Reading from the N-terminus, the 328-residue chain is GMP reductase (328 aa).

The active-site Thioimidate intermediate is the cysteine 176. 205–228 (IIADGGIRTHGDIAKSIRFGASMV) is a binding site for NADP(+).

Belongs to the IMPDH/GMPR family. GuaC type 2 subfamily.

It carries out the reaction IMP + NH4(+) + NADP(+) = GMP + NADPH + 2 H(+). Catalyzes the irreversible NADPH-dependent deamination of GMP to IMP. It functions in the conversion of nucleobase, nucleoside and nucleotide derivatives of G to A nucleotides, and in maintaining the intracellular balance of A and G nucleotides. The chain is GMP reductase from Streptococcus pneumoniae (strain Hungary19A-6).